Consider the following 550-residue polypeptide: Cochlin (550 aa).

A signal peptide spans 1-15 (MPAAWMPVLRLGAYA). Residues 28–121 (VPIAITCFTR…QTLARWSASF (94 aa)) form the LCCL domain. 2 cysteine pairs are disulfide-bonded: C34-C50 and C54-C74. N-linked (GlcNAc...) asparagine glycosylation occurs at N100. The segment covering 126-139 (GKSSTQEATGQAVS) has biased composition (polar residues). The tract at residues 126–158 (GKSSTQEATGQAVSTARPPTGKRLKKTPEKKTG) is disordered. VWFA domains lie at 165-350 (DIAF…VQKL) and 367-537 (NIAF…VSDI).

In terms of assembly, monomer. May form homodimer. Interacts with type II collagen. Interacts with ANXA2. Interacts with SLC44A2. N-glycosylated.

It is found in the secreted. The protein localises to the extracellular space. It localises to the extracellular matrix. Plays a role in the control of cell shape and motility in the trabecular meshwork. This is Cochlin (COCH) from Cavia porcellus (Guinea pig).